Reading from the N-terminus, the 298-residue chain is Quinolinate synthase (298 aa).

Residues H19 and S36 each contribute to the iminosuccinate site. C81 provides a ligand contact to [4Fe-4S] cluster. Iminosuccinate-binding positions include 107-109 (YVN) and S124. C168 is a [4Fe-4S] cluster binding site. Iminosuccinate-binding positions include 193-195 (HPE) and T210. C254 serves as a coordination point for [4Fe-4S] cluster.

This sequence belongs to the quinolinate synthase family. Type 2 subfamily. Requires [4Fe-4S] cluster as cofactor.

Its subcellular location is the cytoplasm. The enzyme catalyses iminosuccinate + dihydroxyacetone phosphate = quinolinate + phosphate + 2 H2O + H(+). Its pathway is cofactor biosynthesis; NAD(+) biosynthesis; quinolinate from iminoaspartate: step 1/1. Catalyzes the condensation of iminoaspartate with dihydroxyacetone phosphate to form quinolinate. This is Quinolinate synthase from Thermotoga sp. (strain RQ2).